The chain runs to 292 residues: Acetylglutamate kinase (292 aa).

Substrate is bound by residues Gly-64 to Gly-65, Arg-86, and Asn-190.

The protein belongs to the acetylglutamate kinase family. ArgB subfamily.

The protein localises to the cytoplasm. It catalyses the reaction N-acetyl-L-glutamate + ATP = N-acetyl-L-glutamyl 5-phosphate + ADP. The protein operates within amino-acid biosynthesis; L-arginine biosynthesis; N(2)-acetyl-L-ornithine from L-glutamate: step 2/4. Catalyzes the ATP-dependent phosphorylation of N-acetyl-L-glutamate. In Geobacter sulfurreducens (strain ATCC 51573 / DSM 12127 / PCA), this protein is Acetylglutamate kinase.